Reading from the N-terminus, the 1349-residue chain is DNA-directed RNA polymerase subunit beta' (1349 aa).

Positions 219, 293, 300, and 303 each coordinate Zn(2+). The tract at residues 1298 to 1349 (LDSPTLGESGFGSRRAERSVLDDEDELIADEVVDDDDFEEEEEDDEDDFDDE) is disordered. A compositionally biased stretch (acidic residues) spans 1319–1349 (DDEDELIADEVVDDDDFEEEEEDDEDDFDDE).

It belongs to the RNA polymerase beta' chain family. RpoC2 subfamily. In cyanobacteria the RNAP catalytic core is composed of 2 alpha, 1 beta, 1 beta', 1 gamma and 1 omega subunit. When a sigma factor is associated with the core the holoenzyme is formed, which can initiate transcription. Zn(2+) is required as a cofactor.

It catalyses the reaction RNA(n) + a ribonucleoside 5'-triphosphate = RNA(n+1) + diphosphate. Its function is as follows. DNA-dependent RNA polymerase catalyzes the transcription of DNA into RNA using the four ribonucleoside triphosphates as substrates. This Nostoc punctiforme (strain ATCC 29133 / PCC 73102) protein is DNA-directed RNA polymerase subunit beta'.